The following is a 393-amino-acid chain: MTASATRNDLMIVNLGPQHPSMHGVLRLIVTLDGEDVIDCEPILGYLHRGMEKIAENRTIIQYLPYVTRWDYLATMFTEAITVNAPEQLGNIQVPKRASYIRVIMLELSRIASHLLWLGPFLADIGAQTPFFYIFRERELIYDLFEAATGMRMMHNYFRIGGVAADLPHGWIDKCLDFCDFFLTRVTEYQKLITRNPIFLERVEGVGIIGGAEAINWGLSGPMLRASGIQWDLRKVDHYESYDEFDWGVQWQKEGDSLARYLVRISEMTESIKIIQQALEGIPGGPYENLEIRRFDKVRDPEWNDFDYRFISKKPSPTFELSKQELYVRVEAPKGELGIFLIGDRGVFPWRWKIRPPGFINLQILPQLVKRMKLADIMTILGSIDIIMGEVDR.

The protein belongs to the complex I 49 kDa subunit family. NDH is composed of at least 16 different subunits, 5 of which are encoded in the nucleus.

It localises to the plastid. The protein localises to the chloroplast thylakoid membrane. The enzyme catalyses a plastoquinone + NADH + (n+1) H(+)(in) = a plastoquinol + NAD(+) + n H(+)(out). It catalyses the reaction a plastoquinone + NADPH + (n+1) H(+)(in) = a plastoquinol + NADP(+) + n H(+)(out). Its function is as follows. NDH shuttles electrons from NAD(P)H:plastoquinone, via FMN and iron-sulfur (Fe-S) centers, to quinones in the photosynthetic chain and possibly in a chloroplast respiratory chain. The immediate electron acceptor for the enzyme in this species is believed to be plastoquinone. Couples the redox reaction to proton translocation, and thus conserves the redox energy in a proton gradient. The chain is NAD(P)H-quinone oxidoreductase subunit H, chloroplastic from Panax ginseng (Korean ginseng).